Consider the following 677-residue polypeptide: DNA ligase (677 aa).

NAD(+) is bound by residues 38–42 (DYDFD), 87–88 (SL), and glutamate 121. The active-site N6-AMP-lysine intermediate is the lysine 123. The NAD(+) site is built by arginine 144, glutamate 187, lysine 300, and lysine 324. Residues cysteine 418, cysteine 421, cysteine 436, and cysteine 442 each contribute to the Zn(2+) site. The region spanning 601-677 (LINSNFEGLS…ISEEEFEAML (77 aa)) is the BRCT domain.

This sequence belongs to the NAD-dependent DNA ligase family. LigA subfamily. It depends on Mg(2+) as a cofactor. Requires Mn(2+) as cofactor.

It catalyses the reaction NAD(+) + (deoxyribonucleotide)n-3'-hydroxyl + 5'-phospho-(deoxyribonucleotide)m = (deoxyribonucleotide)n+m + AMP + beta-nicotinamide D-nucleotide.. Its function is as follows. DNA ligase that catalyzes the formation of phosphodiester linkages between 5'-phosphoryl and 3'-hydroxyl groups in double-stranded DNA using NAD as a coenzyme and as the energy source for the reaction. It is essential for DNA replication and repair of damaged DNA. This is DNA ligase from Chlorobium luteolum (strain DSM 273 / BCRC 81028 / 2530) (Pelodictyon luteolum).